We begin with the raw amino-acid sequence, 217 residues long: MIKLRMPAGGERYIDGKSVYKLYLMIKQHMNGKYDVIKYNWCMRVSDAAYQKRRDKYFFQKLSEKYKLKELALIFISNLVANQDAWIGDISDADALVFYREYIGRLKQIKFKFEEDIRNIYYFSKKVEVSAFKEIFEYNPKVQSSYIFKLLQSNIISFETFILLDSFLNIIDKHDEQTDNLVWNNYSIKLKAYRKILNIDSQKAKNVFIETVKSCKY.

It belongs to the Tequatrovirus DNA helicase assembly protein family. Monomer. Homohexamer; when associated with DNA. Interacts (via C-terminus) with the DnaB-like replicative helicase (via C-terminus); this interaction brings about the rapid assembly of the helicase onto ssDNA. Interacts (via C-terminus) with the single-stranded DNA-binding protein; a ternary complex between the helicase assembly protein, the single-stranded DNA-binding protein and ssDNA is an obligatory intermediate in the helicase loading mechanism. Interacts with the viral DNA polymerase. Binds to single and double-stranded DNA. Part of the replicase complex that includes the DNA polymerase, the polymerase clamp, the clamp loader complex, the single-stranded DNA binding protein (SSB), the primase, the DnaB-like replicative helicase and the helicase assembly factor.

Functionally, DNA helicase loader protein that participates in viral DNA replication, recombination, and repair. At the fork, required for loading of the replicative helicase onto DNA protected by the ssDNA-binding protein. Coordinates simultaneous synthesis of leading- and lagging-strands. The polypeptide is DNA helicase assembly protein (Enterobacteria phage T4 (Bacteriophage T4)).